The primary structure comprises 209 residues: Urease accessory protein UreE (209 aa).

Over residues 170 to 196 (EHHGHSHSHSHDHDHDHDHDHDHDHQH) the composition is skewed to basic and acidic residues. The disordered stretch occupies residues 170–209 (EHHGHSHSHSHDHDHDHDHDHDHDHQHGPSCSHGHHHGHR).

It belongs to the UreE family.

The protein resides in the cytoplasm. In terms of biological role, involved in urease metallocenter assembly. Binds nickel. Probably functions as a nickel donor during metallocenter assembly. This is Urease accessory protein UreE from Burkholderia mallei (strain NCTC 10247).